We begin with the raw amino-acid sequence, 626 residues long: MSQNQETRGFQSEVKQLLQLMIHSLYSNKEIFLRELISNASDAADKLRFKALSNPALYEGDGDLRVRVSFDADKGIITISDNGIGMTREQVIDHLGTIAKSGTKEFLTALGQDQAKNSQLIGQFGVGFYSAFIVADKVTVKTRAAGEEADKAVLWESAGEGEYSVADIEKKSRGTDVILHLREDEKEFLNEWRLREIIGKYSDHIGLPVEMLTKEYDDEGKECGEKWEKINKSDALWTRSKNDVSDEEYKAFYKHLSHDFSDPVTWAHNKVEGNQAYTSLLYVPAKAPWDLFNREHKHGLKLYVQRVFIMDDAEQFMPNYLRFMRGLIDSNDLPLNVSREILQDNKITAALRKALTKRSLQMLEKLAKDDAEKYLQFWKEFGLVLKEGPAEDFANKETIAKLLRFASTHNDGCEQTVSLEDYILRMKEGQKAIYYITADSYVAAKNSPHLELFNKKGIEVLLLSDRIDEWMLSYLTEFDGKQLQSITKADLDLGDLADKESETQKQRDEAFGSFIERVKNLLGERVKTVRLTHNLTDTPAVVSTDNDQMTTQMAKLFAAAGQPVPEVKYTFELNPEHHLVKKVADIADEIEFADWVELLLEQAMLAERGSLENPAAFIKRINKLLG.

The segment at 1–339 is a; substrate-binding; it reads MSQNQETRGF…SNDLPLNVSR (339 aa). Residues 340–555 are b; that stretch reads EILQDNKITA…NDQMTTQMAK (216 aa). A c region spans residues 556–626; sequence LFAAAGQPVP…FIKRINKLLG (71 aa).

It belongs to the heat shock protein 90 family. Homodimer.

Its subcellular location is the cytoplasm. Its function is as follows. Molecular chaperone. Has ATPase activity. In Haemophilus influenzae (strain PittGG), this protein is Chaperone protein HtpG.